Here is a 530-residue protein sequence, read N- to C-terminus: T-complex protein 1 subunit gamma (530 aa).

The protein belongs to the TCP-1 chaperonin family. As to quaternary structure, heterooligomeric complex of about 850 to 900 kDa that forms two stacked rings, 12 to 16 nm in diameter.

The protein resides in the cytoplasm. Its function is as follows. Molecular chaperone; assists the folding of proteins upon ATP hydrolysis. Known to play a role, in vitro, in the folding of actin and tubulin. The chain is T-complex protein 1 subunit gamma (cct3) from Dictyostelium discoideum (Social amoeba).